The sequence spans 309 residues: Glutaminase (309 aa).

Ser64, Asn114, Glu160, Asn167, Tyr191, Tyr243, and Val261 together coordinate substrate.

This sequence belongs to the glutaminase family. In terms of assembly, homotetramer.

The enzyme catalyses L-glutamine + H2O = L-glutamate + NH4(+). The protein is Glutaminase of Rhizobium rhizogenes (strain K84 / ATCC BAA-868) (Agrobacterium radiobacter).